A 237-amino-acid chain; its full sequence is CD99 antigen-like protein 2 (237 aa).

The N-terminal stretch at 1-25 is a signal peptide; it reads MVARLTAFLVCLVFSLATLVQRGYG. Residues 26–161 are Extracellular-facing; the sequence is DTDGFNLEDA…PGSGISTETG (136 aa). Residues 47–157 are disordered; that stretch reads DHFSTTTRRP…SNDDPGSGIS (111 aa). Composition is skewed to low complexity over residues 51–66 and 74–84; these read TTTR…ANPA and TTTTRRPGTTR. Residues 102–111 are compositionally biased toward basic and acidic residues; sequence DDRNDLDGPK. Ser154 carries an O-linked (Xyl...) (chondroitin sulfate) serine glycan. Residues 162–182 traverse the membrane as a helical segment; the sequence is TIAGVASALAMALIGAVSSYI. Over 183 to 237 the chain is Cytoplasmic; the sequence is SYQQKKFCFSIQQGLNADYVKGENLEAVVCEEPQVTYSKQETQSAEPPPPEPPRI. The span at 218–227 shows a compositional bias: polar residues; it reads TYSKQETQSA. The disordered stretch occupies residues 218 to 237; sequence TYSKQETQSAEPPPPEPPRI. Pro residues predominate over residues 228–237; that stretch reads EPPPPEPPRI.

Belongs to the CD99 family. O-glycosylated. In terms of tissue distribution, highly expressed in the nervous system, including brain, dentate nucleus of hippocampus, granular and Purkinje cells of cerebellum, brain stem nucleus and choroid plexus. Expressed in peripheral blood T- and B-cells and neutrophils (at protein level). Almost undetectable in bone marrow-derived neutrophils (at protein level). Also expressed in thymocytes (at protein level) with higher expression in cortical thymocytes than in medullary thymocytes. Expressed at high levels in testis (mostly in germ cells and Sertoli cells) and ovary (mostly in granulosa cells). Expressed in lung, heart, kidney and liver (at protein level); however, expression in heart, kidney and liver seems restricted to endothelial cells (at protein level). Highly expressed in endothelial cells and to a lower level in vascular smooth muscle cells (at protein level). Low expression in spleen.

It is found in the cell membrane. The protein resides in the cell junction. The protein localises to the secreted. Plays a role in a late step of leukocyte extravasation helping cells to overcome the endothelial basement membrane. Acts at the same site as, but independently of, PECAM1. Homophilic adhesion molecule, but these interactions may not be required for cell aggregation. This is CD99 antigen-like protein 2 (Cd99l2) from Mus musculus (Mouse).